The sequence spans 236 residues: UPF0502 protein Bxeno_B1639 (236 aa).

Belongs to the UPF0502 family.

The protein is UPF0502 protein Bxeno_B1639 of Paraburkholderia xenovorans (strain LB400).